We begin with the raw amino-acid sequence, 242 residues long: Putative ABC transporter ATP-binding protein TTE0246 (242 aa).

The 238-residue stretch at 5–242 (FELKNVSYFY…EKLLLKANLI (238 aa)) folds into the ABC transporter domain. Residue 38–45 (GANGSGKS) participates in ATP binding.

It belongs to the ABC transporter superfamily.

Its subcellular location is the cell membrane. Probably part of an ABC transporter complex. Responsible for energy coupling to the transport system. The chain is Putative ABC transporter ATP-binding protein TTE0246 from Caldanaerobacter subterraneus subsp. tengcongensis (strain DSM 15242 / JCM 11007 / NBRC 100824 / MB4) (Thermoanaerobacter tengcongensis).